We begin with the raw amino-acid sequence, 312 residues long: Acetyl-coenzyme A carboxylase carboxyl transferase subunit alpha (312 aa).

In terms of domain architecture, CoA carboxyltransferase C-terminal spans 36–286 (NLEKEISKTY…ADYVKKSLNE (251 aa)).

This sequence belongs to the AccA family. As to quaternary structure, acetyl-CoA carboxylase is a heterohexamer composed of biotin carboxyl carrier protein (AccB), biotin carboxylase (AccC) and two subunits each of ACCase subunit alpha (AccA) and ACCase subunit beta (AccD).

It is found in the cytoplasm. It carries out the reaction N(6)-carboxybiotinyl-L-lysyl-[protein] + acetyl-CoA = N(6)-biotinyl-L-lysyl-[protein] + malonyl-CoA. Its pathway is lipid metabolism; malonyl-CoA biosynthesis; malonyl-CoA from acetyl-CoA: step 1/1. Its function is as follows. Component of the acetyl coenzyme A carboxylase (ACC) complex. First, biotin carboxylase catalyzes the carboxylation of biotin on its carrier protein (BCCP) and then the CO(2) group is transferred by the carboxyltransferase to acetyl-CoA to form malonyl-CoA. This chain is Acetyl-coenzyme A carboxylase carboxyl transferase subunit alpha, found in Campylobacter jejuni (strain RM1221).